The sequence spans 436 residues: ATP-dependent RNA helicase SUB2 (436 aa).

Residues 1 to 16 show a composition bias toward acidic residues; it reads MSAEEDLIDYSDEELN. The tract at residues 1–33 is disordered; that stretch reads MSAEEDLIDYSDEELNTNETAAPAADSNGKKGE. Positions 52–80 match the Q motif motif; that stretch reads TGFRDFLLKPELLRAIGDCGFEHPSEVQQ. Positions 83-258 constitute a Helicase ATP-binding domain; sequence IPQAMLGGDI…KKFMQNPTEH (176 aa). 96–103 provides a ligand contact to ATP; that stretch reads AKSGLGKT. Positions 205–208 match the DEAD box motif; it reads DECD. Residues 270 to 431 enclose the Helicase C-terminal domain; sequence GLQQYFVALE…EFPKDGIDAS (162 aa).

Belongs to the DEAD box helicase family. DECD subfamily.

The protein resides in the nucleus. It carries out the reaction ATP + H2O = ADP + phosphate + H(+). Functionally, ATP-binding RNA helicase involved in transcription elongation and required for the export of mRNA out of the nucleus. SUB2 also plays a role in pre-mRNA splicing and spliceosome assembly. May be involved in rDNA and telomeric silencing, and maintenance of genome integrity. The polypeptide is ATP-dependent RNA helicase SUB2 (SUB2) (Pyricularia oryzae (strain 70-15 / ATCC MYA-4617 / FGSC 8958) (Rice blast fungus)).